Reading from the N-terminus, the 336-residue chain is Ferrochelatase (336 aa).

Residues H206 and E287 each coordinate Fe cation.

It belongs to the ferrochelatase family.

The protein localises to the cytoplasm. It catalyses the reaction heme b + 2 H(+) = protoporphyrin IX + Fe(2+). It functions in the pathway porphyrin-containing compound metabolism; protoheme biosynthesis; protoheme from protoporphyrin-IX: step 1/1. Its function is as follows. Catalyzes the ferrous insertion into protoporphyrin IX. This chain is Ferrochelatase, found in Neisseria meningitidis serogroup C / serotype 2a (strain ATCC 700532 / DSM 15464 / FAM18).